We begin with the raw amino-acid sequence, 161 residues long: Copper transporter 1 (161 aa).

Helical transmembrane passes span 55-75 (GGMY…VEFL) and 109-129 (VAYL…LVAV).

Belongs to the copper transporter (Ctr) (TC 1.A.56) family. SLC31A subfamily. In terms of assembly, self-interacts. Interacts with SWEET11 and COPT2.

It localises to the cell membrane. Involved in the transport of copper, in cooperation with SWEET11 and COPT2. Contributes to the removal of copper (Cu) from xylem, and thus to the sensitivity toward bacterial pathogens such as X.oryzae pv. oryzae (Xoo). This chain is Copper transporter 1 (COPT1), found in Oryza sativa subsp. japonica (Rice).